Here is a 340-residue protein sequence, read N- to C-terminus: tRNA N6-adenosine threonylcarbamoyltransferase (340 aa).

Residues histidine 113 and histidine 117 each coordinate Fe cation. Substrate contacts are provided by residues 135–139 (LVSGG), aspartate 169, glycine 182, aspartate 186, and asparagine 274. Fe cation is bound at residue aspartate 302.

It belongs to the KAE1 / TsaD family. Requires Fe(2+) as cofactor.

Its subcellular location is the cytoplasm. It catalyses the reaction L-threonylcarbamoyladenylate + adenosine(37) in tRNA = N(6)-L-threonylcarbamoyladenosine(37) in tRNA + AMP + H(+). Required for the formation of a threonylcarbamoyl group on adenosine at position 37 (t(6)A37) in tRNAs that read codons beginning with adenine. Is involved in the transfer of the threonylcarbamoyl moiety of threonylcarbamoyl-AMP (TC-AMP) to the N6 group of A37, together with TsaE and TsaB. TsaD likely plays a direct catalytic role in this reaction. This is tRNA N6-adenosine threonylcarbamoyltransferase from Mycolicibacterium gilvum (strain PYR-GCK) (Mycobacterium gilvum (strain PYR-GCK)).